A 111-amino-acid polypeptide reads, in one-letter code: Disintegrin DS-AS (111 aa).

The first 20 residues, 1–20 (MIQVLLVIICLAVFPYQGSC), serve as a signal peptide directing secretion. The propeptide occupies 21 to 47 (IILESGNVNDYEIVYPKKLIVLPTGAM). In terms of domain architecture, Disintegrin spans 47–111 (MNSPHPCCDP…PDCPRNPYKD (65 aa)). Disulfide bonds link Cys53–Cys76, Cys67–Cys73, Cys72–Cys97, and Cys85–Cys104. A Cell attachment site motif is present at residues 89–91 (RGD).

In terms of assembly, heterodimer; disulfide-linked.

The protein resides in the secreted. Functionally, inhibits ADP-induced platelet aggregation in human platelet-rich plasma (IC(50) is 8 uM). In Atheris squamigera (Variable bush viper), this protein is Disintegrin DS-AS.